We begin with the raw amino-acid sequence, 333 residues long: Holliday junction branch migration complex subunit RuvB (333 aa).

A large ATPase domain (RuvB-L) region spans residues 1-182; the sequence is MDERLLSGES…FGVLSRLEYY (182 aa). ATP-binding positions include leucine 21, arginine 22, glycine 63, lysine 66, threonine 67, threonine 68, 129–131, arginine 172, tyrosine 182, and arginine 219; that span reads EDF. Mg(2+) is bound at residue threonine 67. The segment at 183-253 is small ATPAse domain (RuvB-S); it reads TVDQLSAIVE…ITQMALELLQ (71 aa). The head domain (RuvB-H) stretch occupies residues 256 to 333; it reads KLGLDHIDHK…EHFGMEMPKV (78 aa). DNA-binding residues include arginine 311 and arginine 316.

It belongs to the RuvB family. In terms of assembly, homohexamer. Forms an RuvA(8)-RuvB(12)-Holliday junction (HJ) complex. HJ DNA is sandwiched between 2 RuvA tetramers; dsDNA enters through RuvA and exits via RuvB. An RuvB hexamer assembles on each DNA strand where it exits the tetramer. Each RuvB hexamer is contacted by two RuvA subunits (via domain III) on 2 adjacent RuvB subunits; this complex drives branch migration. In the full resolvosome a probable DNA-RuvA(4)-RuvB(12)-RuvC(2) complex forms which resolves the HJ.

The protein resides in the cytoplasm. It carries out the reaction ATP + H2O = ADP + phosphate + H(+). Functionally, the RuvA-RuvB-RuvC complex processes Holliday junction (HJ) DNA during genetic recombination and DNA repair, while the RuvA-RuvB complex plays an important role in the rescue of blocked DNA replication forks via replication fork reversal (RFR). RuvA specifically binds to HJ cruciform DNA, conferring on it an open structure. The RuvB hexamer acts as an ATP-dependent pump, pulling dsDNA into and through the RuvAB complex. RuvB forms 2 homohexamers on either side of HJ DNA bound by 1 or 2 RuvA tetramers; 4 subunits per hexamer contact DNA at a time. Coordinated motions by a converter formed by DNA-disengaged RuvB subunits stimulates ATP hydrolysis and nucleotide exchange. Immobilization of the converter enables RuvB to convert the ATP-contained energy into a lever motion, pulling 2 nucleotides of DNA out of the RuvA tetramer per ATP hydrolyzed, thus driving DNA branch migration. The RuvB motors rotate together with the DNA substrate, which together with the progressing nucleotide cycle form the mechanistic basis for DNA recombination by continuous HJ branch migration. Branch migration allows RuvC to scan DNA until it finds its consensus sequence, where it cleaves and resolves cruciform DNA. This Bacillus anthracis (strain A0248) protein is Holliday junction branch migration complex subunit RuvB.